The following is a 101-amino-acid chain: Small ribosomal subunit protein uS14 (101 aa).

Belongs to the universal ribosomal protein uS14 family. As to quaternary structure, part of the 30S ribosomal subunit. Contacts proteins S3 and S10.

Its function is as follows. Binds 16S rRNA, required for the assembly of 30S particles and may also be responsible for determining the conformation of the 16S rRNA at the A site. The protein is Small ribosomal subunit protein uS14 of Buchnera aphidicola subsp. Baizongia pistaciae (strain Bp).